The following is a 287-amino-acid chain: 2' cyclic ADP-D-ribose synthase BtTIR (287 aa).

The TIR domain maps to 155 to 287 (KQYDFFISHA…DDIVENLKNL (133 aa)). Residue Glu-230 is part of the active site.

Homodimer.

It catalyses the reaction NAD(+) = 2'cADPR + nicotinamide + H(+). Its function is as follows. NAD(+) hydrolase (NADase) that cleaves NAD(+) into nicotinamide and 2' cyclic ADP-D-ribose (2'cADPR). This chain is 2' cyclic ADP-D-ribose synthase BtTIR, found in Bacteroides thetaiotaomicron.